A 428-amino-acid polypeptide reads, in one-letter code: MMTYQEIFNEIKNKAYFKNHRHVLIAVSGGVDSMNLLHFLYLFQDKLKIRIGIAHVNHKQRSESDSEEAYLKCWAKKHDIPIYVSNFEGIFSEKAARDWRYAFFKSIMLKNNYSALVTAHHSDDQAETILMRLIRGSRLRHLSGIKSVQPFANGQLIRPFLTFSKKDLPEIFHFEDSSNRELSFLRNRVRNNYLPLLKQENPRFIQGLNQLALENSLLFQAFKELTNHITTTDLTEFNEQSKSIQYFLLQDYLEGFPDLDLKKSQFTQLLQIIQIAKQGYYYLKKDYYIFIDKFSFKITKIVPKTELVKEEKMLEYDSNLCYRDYYFSFMPKSNEDQGQVNIPLFSLSSIKLRSRQSGDYISFGHFSKKIRRLFIDEKFTIAERQNAIVGEQDGEIIFVLVGDKTYLRKACKHDIMLAKLYIDKLEKG.

S28 to S33 is an ATP binding site.

This sequence belongs to the tRNA(Ile)-lysidine synthase family.

Its subcellular location is the cytoplasm. It carries out the reaction cytidine(34) in tRNA(Ile2) + L-lysine + ATP = lysidine(34) in tRNA(Ile2) + AMP + diphosphate + H(+). Its function is as follows. Ligates lysine onto the cytidine present at position 34 of the AUA codon-specific tRNA(Ile) that contains the anticodon CAU, in an ATP-dependent manner. Cytidine is converted to lysidine, thus changing the amino acid specificity of the tRNA from methionine to isoleucine. This Streptococcus pyogenes serotype M6 (strain ATCC BAA-946 / MGAS10394) protein is tRNA(Ile)-lysidine synthase.